The following is a 127-amino-acid chain: Group 3 truncated hemoglobin ctb (127 aa).

Heme-binding residues include Tyr-64 and His-72.

Belongs to the truncated hemoglobin family. Group III subfamily. As to quaternary structure, monomer. Requires heme as cofactor.

It localises to the cytoplasm. Has been suggested to be involved in cytochrome c peroxidase or P450-like oxygen chemistry or cyanide detoxification. The high oxygen affinity of this protein suggests that it probably does not function as an oxygen transporter. The chain is Group 3 truncated hemoglobin ctb (ctb) from Campylobacter jejuni subsp. jejuni serotype O:2 (strain ATCC 700819 / NCTC 11168).